Consider the following 264-residue polypeptide: ATP synthase subunit a (264 aa).

The next 6 membrane-spanning stretches (helical) occupy residues 29–49 (TWHIDSLFFSVGLGVLFLWIF), 90–110 (IAPLALTIFMWVFMMNFMDMI), 134–154 (DVNITFSLAIGVFVLIIYYSI), 177–197 (IPVNLLLETVTLIAKPISLAL), 208–228 (LIFILIALMYGTNLLLSSLGV), and 235–255 (LIFHILVITLQAFIFMMLTIV).

It belongs to the ATPase A chain family. In terms of assembly, F-type ATPases have 2 components, CF(1) - the catalytic core - and CF(0) - the membrane proton channel. CF(1) has five subunits: alpha(3), beta(3), gamma(1), delta(1), epsilon(1). CF(0) has three main subunits: a(1), b(2) and c(9-12). The alpha and beta chains form an alternating ring which encloses part of the gamma chain. CF(1) is attached to CF(0) by a central stalk formed by the gamma and epsilon chains, while a peripheral stalk is formed by the delta and b chains.

It is found in the cell inner membrane. In terms of biological role, key component of the proton channel; it plays a direct role in the translocation of protons across the membrane. This chain is ATP synthase subunit a, found in Shewanella oneidensis (strain ATCC 700550 / JCM 31522 / CIP 106686 / LMG 19005 / NCIMB 14063 / MR-1).